Here is a 217-residue protein sequence, read N- to C-terminus: Kunitz-type trypsin inhibitor-like 2 protein (217 aa).

The N-terminal stretch at 1 to 26 (MKPLSPLTLSFLLFVFITTLSLAFSN) is a signal peptide. 2 cysteine pairs are disulfide-bonded: C70-C115 and C168-C175. N-linked (GlcNAc...) asparagine glycosylation is present at N191.

The protein belongs to the protease inhibitor I3 (leguminous Kunitz-type inhibitor) family.

The protein resides in the secreted. Its function is as follows. Might act as a protease inhibitor involved in plant defense responses. The protein is Kunitz-type trypsin inhibitor-like 2 protein (PIP20-2) of Pisum sativum (Garden pea).